Here is a 126-residue protein sequence, read N- to C-terminus: Methylglyoxal synthase (126 aa).

One can recognise an MGS-like domain in the interval 1–126 (MAGGKCIALI…AERLIKTLNH (126 aa)). Substrate-binding positions include H12, K16, 38–41 (TGTT), and 59–60 (SG). D65 functions as the Proton donor/acceptor in the catalytic mechanism. H92 is a substrate binding site.

This sequence belongs to the methylglyoxal synthase family.

The catalysed reaction is dihydroxyacetone phosphate = methylglyoxal + phosphate. Catalyzes the formation of methylglyoxal from dihydroxyacetone phosphate. This Rhizobium rhizogenes (strain K84 / ATCC BAA-868) (Agrobacterium radiobacter) protein is Methylglyoxal synthase.